The sequence spans 553 residues: Efflux pump mlcE (553 aa).

Residues 1-19 show a composition bias toward basic and acidic residues; it reads MSEPLPPKEGEPRPQKEES. A disordered region spans residues 1–29; sequence MSEPLPPKEGEPRPQKEESQNDTLEATES. An N-linked (GlcNAc...) asparagine glycan is attached at N21. The next 13 membrane-spanning stretches (helical) occupy residues 41–61, 77–96, 101–121, 136–156, 164–184, 196–216, 245–265, 273–293, 319–339, 352–372, 376–396, 440–460, and 516–536; these read LVVA…SIIV, VGWY…PLAG, LLGL…GSVL, AVAG…LSTA, VLIG…PLLG, CFYI…VITI, LVGF…LEWG, SSVI…FVLW, LFMG…PIYF, VYML…GFAI, GYYL…AGLV, ALGI…FLDF, and TFYL…GMGW. N543 is a glycosylation site (N-linked (GlcNAc...) asparagine).

The protein belongs to the major facilitator superfamily. TCR/Tet family.

It localises to the membrane. Its function is as follows. Efflux pump; part of the gene cluster that mediates the biosynthesis of compactin, also known as mevastatin or ML-236B, and which acts as a potent competitive inhibitor of HMG-CoA reductase. This Penicillium citrinum protein is Efflux pump mlcE.